A 249-amino-acid chain; its full sequence is Triosephosphate isomerase (249 aa).

Substrate-binding residues include N12 and K14. K14 bears the N6-acetyllysine mark. Position 68 is a 3'-nitrotyrosine (Y68). A Phosphoserine modification is found at S80. H96 serves as the catalytic Electrophile. S106 is modified (phosphoserine). K142 participates in a covalent cross-link: Glycyl lysine isopeptide (Lys-Gly) (interchain with G-Cter in SUMO1). An N6-succinyllysine modification is found at K149. N6-acetyllysine; alternate is present on K156. K156 is subject to N6-succinyllysine; alternate. E166 functions as the Proton acceptor in the catalytic mechanism. Position 173 is a phosphothreonine (T173). N6-acetyllysine; alternate is present on K194. K194 is subject to N6-succinyllysine; alternate. Position 194 is an N6-methyllysine; alternate (K194). S198 carries the post-translational modification Phosphoserine. Y209 is subject to 3'-nitrotyrosine. S212 bears the Phosphoserine mark. Residue T214 is modified to Phosphothreonine. S223 carries the phosphoserine modification. K238 is subject to N6-acetyllysine.

It belongs to the triosephosphate isomerase family. As to quaternary structure, homodimer.

The protein localises to the cytoplasm. It catalyses the reaction dihydroxyacetone phosphate = methylglyoxal + phosphate. The catalysed reaction is D-glyceraldehyde 3-phosphate = dihydroxyacetone phosphate. Its pathway is carbohydrate degradation; glycolysis; D-glyceraldehyde 3-phosphate from glycerone phosphate: step 1/1. It participates in carbohydrate biosynthesis; gluconeogenesis. In terms of biological role, triosephosphate isomerase is an extremely efficient metabolic enzyme that catalyzes the interconversion between dihydroxyacetone phosphate (DHAP) and D-glyceraldehyde-3-phosphate (G3P) in glycolysis and gluconeogenesis. Its function is as follows. It is also responsible for the non-negligible production of methylglyoxal a reactive cytotoxic side-product that modifies and can alter proteins, DNA and lipids. The protein is Triosephosphate isomerase (Tpi1) of Rattus norvegicus (Rat).